The sequence spans 486 residues: Heme A synthase COX15 (486 aa).

The N-terminal 33 residues, 1–33, are a transit peptide targeting the mitochondrion; the sequence is MLFRNIEVGRQAAKLLTRTSSRLAWQSIGASRN. The Mitochondrial matrix segment spans residues 34 to 85; sequence ISTIRQQIRKTQLYNFKKTVSIRPFSLSSPVFKPHVASESNPIESRLKTSKN. A helical transmembrane segment spans residues 86 to 106; that stretch reads VAYWLIGTSGLVFGIVVLGGL. Residues 107-170 are Mitochondrial intermembrane-facing; that stretch reads TRLTESGLSI…FIFFMEWIHR (64 aa). H169 is a binding site for heme o. The chain crosses the membrane as a helical span at residues 171–191; that stretch reads LWGRAIGAVFILPAVYFAVSK. The Mitochondrial matrix segment spans residues 192 to 200; it reads KTSGHVNKR. Residues 201 to 221 traverse the membrane as a helical segment; it reads LFGLAGLLGLQGFVGWWMVKS. The Mitochondrial intermembrane segment spans residues 222–243; it reads GLDQEQLDARKSKPTVSQYRLT. Residues 244–264 form a helical membrane-spanning segment; that stretch reads THLGTAFFLYMGMLWTGLEIL. Heme o is bound at residue H245. At 265 to 293 the chain is on the mitochondrial matrix side; sequence RECKWIKNPVQAISLFKKLDNPAIGPMRK. A helical membrane pass occupies residues 294–314; sequence ISLALLAVSFLTAMSGGMVAG. The Mitochondrial intermembrane segment spans residues 315–364; it reads LDAGWVYNTWPKMGERWFPSSRELMDENFCRREDKKDLWWRNLLENPVTV. The helical transmembrane segment at 365–387 threads the bilayer; the sequence is QLVHRTCAYVAFTSVLAAHMYAI. H368 is a heme b binding site. Over 388–402 the chain is Mitochondrial matrix; sequence KKKAVIPRNAMTSLH. Residues 403 to 423 form a helical membrane-spanning segment; the sequence is VMMGVVTLQATLGILTILYLV. Position 424 (P424) is a topological domain, mitochondrial intermembrane. The chain crosses the membrane as a helical span at residues 425-445; sequence ISLASIHQAGALALLTSSLVF. A heme b-binding site is contributed by H431. Topologically, residues 446-486 are mitochondrial matrix; the sequence is ASQLRKPRAPMRNVIITLPHSSKVTSGKILSEASKLASKPL.

This sequence belongs to the COX15/CtaA family. Type 2 subfamily. In terms of assembly, forms 200-350 kDa oligomeric complexes independent on heme binding. In addition to form homooligomeric complexes, a portion also associates with the mitochondrial respiratory supercomplexes. Interacts with CcO assembly factors PET117, SHY1, COA3 and COA1, CcO subunit COX13 and cytochrome b-c1 subunit COR1. Requires heme b as cofactor.

It localises to the mitochondrion inner membrane. It carries out the reaction Fe(II)-heme o + 2 A + H2O = Fe(II)-heme a + 2 AH2. It functions in the pathway porphyrin-containing compound metabolism; heme A biosynthesis; heme A from heme O: step 1/1. Its function is as follows. Catalyzes the second reaction in the biosynthesis of heme A, a prosthetic group of mitochondrial cytochrome c oxidase (CcO). Heme A is synthesized from heme B by two sequential enzymatic reactions catalyzed by heme O synthase (HOS/COX10) and heme A synthase (HAS/COX15). HAS catalyzes the conversion of heme O to heme A by two successive hydroxylations of the methyl group at C8, in a reaction that involves matrix ferredoxin YAH1 and ferredoxin reductase ARH1. The first hydroxylation forms heme I, the second hydroxylation results in an unstable dihydroxymethyl group, which spontaneously dehydrates, resulting in the formyl group of heme A. May also play a secondary role in CcO assembly. Plays a role in the maturation of COX1, the heme A-containing structural CcO subunit, possibly by interacting with the COX1-containing sub-assembly complexes that form prior to heme A insertion. May also positively regulate the upstream enzymatic reaction, farnesylation of heme B by HOS/COX10. The polypeptide is Heme A synthase COX15 (Saccharomyces cerevisiae (strain ATCC 204508 / S288c) (Baker's yeast)).